The following is a 602-amino-acid chain: Laccase 1 (602 aa).

Residues methionine 1–alanine 20 form the signal peptide. Plastocyanin-like domains follow at residues threonine 30 to lysine 128 and tyrosine 157 to asparagine 345. Residues histidine 78, histidine 80, histidine 108, and histidine 110 each contribute to the Cu cation site. N-linked (GlcNAc...) asparagine glycosylation is found at asparagine 176, asparagine 241, asparagine 264, asparagine 388, asparagine 430, asparagine 454, and asparagine 470. Positions asparagine 461–glycine 584 constitute a Plastocyanin-like 3 domain. Cu cation contacts are provided by histidine 492, histidine 495, and histidine 497. Asparagine 512 carries N-linked (GlcNAc...) asparagine glycosylation. Cu cation contacts are provided by histidine 566, cysteine 567, histidine 568, and histidine 572.

This sequence belongs to the multicopper oxidase family. It depends on Cu cation as a cofactor.

The protein localises to the cell surface. It participates in pigment biosynthesis. Its function is as follows. Laccase; part of the Pks1 gene cluster that mediates the biosynthesis of an anthraquinone derivative pigment that contributes to conidial pigmentation that provides protection from UV radiation, heat and cold stress. The polyketide synthase Pks1 produces 1-acetyl-2,4,6,8-tetrahydroxy-9,10-anthraquinone though condensation of acetyl-CoA with malonyl-CoA. The dehydratase EthD and the laccase Mlac1 further convert the anthraquinone derivative into the final conidial pigment. The sequence is that of Laccase 1 from Metarhizium album (strain ARSEF 1941).